A 329-amino-acid polypeptide reads, in one-letter code: MKKQDLMSIDEIQKLADPDMQKVNQNILAQLNSDVPLIGQLGFYIVQGGGKRIRPLIAVLAARSLGFEGSNSITCATFVEFIHTASLLHDDVVDESDMRRGRATANAEFGNAASVLVGDFIYTRAFQLVAQLESLKILSIMADATNVLAEGEVQQLMNVNDPETSEANYMRVIYSKTARLFEVAGQAAAIVAGGTEAQEKALQDYGRYLGTAFQLVDDVLDYSANTQALGKNVGDDLAEGKPTLPLLHAMRHGNAQQAALIREAIEQGGKREAIDEVLAIMTEHKSLDYAMNRAKEEAQKAVDAIEILPESEYKQALISLAYLSVDRNY.

Isopentenyl diphosphate-binding residues include lysine 51, arginine 54, and histidine 83. Mg(2+)-binding residues include aspartate 90 and aspartate 94. An all-trans-polyprenyl diphosphate is bound at residue arginine 99. Arginine 100 is an isopentenyl diphosphate binding site. An all-trans-polyprenyl diphosphate-binding residues include lysine 176, threonine 177, and glutamine 214.

Belongs to the FPP/GGPP synthase family. It depends on Mg(2+) as a cofactor.

The enzyme catalyses 5 isopentenyl diphosphate + (2E,6E)-farnesyl diphosphate = all-trans-octaprenyl diphosphate + 5 diphosphate. In terms of biological role, supplies octaprenyl diphosphate, the precursor for the side chain of the isoprenoid quinones ubiquinone and menaquinone. The chain is Octaprenyl diphosphate synthase (ispB) from Haemophilus influenzae (strain ATCC 51907 / DSM 11121 / KW20 / Rd).